Reading from the N-terminus, the 195-residue chain is Probable nicotinate-nucleotide adenylyltransferase (195 aa).

The protein belongs to the NadD family.

It catalyses the reaction nicotinate beta-D-ribonucleotide + ATP + H(+) = deamido-NAD(+) + diphosphate. It participates in cofactor biosynthesis; NAD(+) biosynthesis; deamido-NAD(+) from nicotinate D-ribonucleotide: step 1/1. Catalyzes the reversible adenylation of nicotinate mononucleotide (NaMN) to nicotinic acid adenine dinucleotide (NaAD). This is Probable nicotinate-nucleotide adenylyltransferase from Mesorhizobium japonicum (strain LMG 29417 / CECT 9101 / MAFF 303099) (Mesorhizobium loti (strain MAFF 303099)).